We begin with the raw amino-acid sequence, 93 residues long: Probable chloroethene reductive dehalogenase membrane anchor protein (93 aa).

Helical transmembrane passes span 3-23 (AIYF…FTWF), 35-55 (WVLG…TYAS), and 64-84 (SAWI…LFAA).

The protein belongs to the PceB family.

It localises to the cell membrane. May act as a membrane anchor for the chloroethene reductive dehalogenase VcrA. This chain is Probable chloroethene reductive dehalogenase membrane anchor protein, found in Dehalococcoides mccartyi (strain VS).